A 412-amino-acid polypeptide reads, in one-letter code: Gamma-glutamyl phosphate reductase (412 aa).

This sequence belongs to the gamma-glutamyl phosphate reductase family.

It localises to the cytoplasm. It catalyses the reaction L-glutamate 5-semialdehyde + phosphate + NADP(+) = L-glutamyl 5-phosphate + NADPH + H(+). The protein operates within amino-acid biosynthesis; L-proline biosynthesis; L-glutamate 5-semialdehyde from L-glutamate: step 2/2. Its function is as follows. Catalyzes the NADPH-dependent reduction of L-glutamate 5-phosphate into L-glutamate 5-semialdehyde and phosphate. The product spontaneously undergoes cyclization to form 1-pyrroline-5-carboxylate. The protein is Gamma-glutamyl phosphate reductase of Actinobacillus pleuropneumoniae serotype 7 (strain AP76).